The chain runs to 49 residues: Large ribosomal subunit protein bL33B (49 aa).

This sequence belongs to the bacterial ribosomal protein bL33 family.

The sequence is that of Large ribosomal subunit protein bL33B (rpmG2) from Lactococcus lactis subsp. lactis (strain IL1403) (Streptococcus lactis).